A 410-amino-acid polypeptide reads, in one-letter code: Argininosuccinate synthase (410 aa).

ATP contacts are provided by residues 13–21 (AYSGGLDTS) and alanine 40. Positions 91 and 96 each coordinate L-citrulline. Position 121 (glycine 121) interacts with ATP. Positions 123, 127, and 128 each coordinate L-aspartate. Asparagine 127 contacts L-citrulline. Residues arginine 131, serine 182, serine 191, glutamate 267, and tyrosine 279 each coordinate L-citrulline.

This sequence belongs to the argininosuccinate synthase family. Type 1 subfamily. In terms of assembly, homotetramer.

The protein localises to the cytoplasm. It catalyses the reaction L-citrulline + L-aspartate + ATP = 2-(N(omega)-L-arginino)succinate + AMP + diphosphate + H(+). Its pathway is amino-acid biosynthesis; L-arginine biosynthesis; L-arginine from L-ornithine and carbamoyl phosphate: step 2/3. The polypeptide is Argininosuccinate synthase (Maricaulis maris (strain MCS10) (Caulobacter maris)).